The sequence spans 102 residues: Small ribosomal subunit protein uS10 (102 aa).

It belongs to the universal ribosomal protein uS10 family. In terms of assembly, part of the 30S ribosomal subunit.

Its function is as follows. Involved in the binding of tRNA to the ribosomes. This chain is Small ribosomal subunit protein uS10, found in Bifidobacterium longum (strain DJO10A).